Here is a 436-residue protein sequence, read N- to C-terminus: Protein GOLM2 (436 aa).

Residue M1 is modified to N-acetylmethionine. The Cytoplasmic segment spans residues 1–14; the sequence is MVGFGANRRAGRLP. A helical; Signal-anchor for type II membrane protein transmembrane segment spans residues 15 to 35; that stretch reads SLVLVVLLVVIVVLAFNYWSI. A coiled-coil region spans residues 35–198; the sequence is ISSRHVLLQE…EEQKQETQKI (164 aa). The Lumenal segment spans residues 36–436; the sequence is SSRHVLLQEE…YGKQHFNDVL (401 aa). Positions 225–247 are enriched in basic and acidic residues; it reads ADKNEEPSSNHIPHGKEQIKRGG. The disordered stretch occupies residues 225-436; that stretch reads ADKNEEPSSN…YGKQHFNDVL (212 aa). Residues S233 and S275 each carry the phosphoserine modification. The segment covering 305 to 321 has biased composition (polar residues); sequence NHNGNPGTSKQNPSSPL. S328 and S332 each carry phosphoserine. The segment covering 344 to 362 has biased composition (basic and acidic residues); that stretch reads ATKDRVSDFHKLKQSRFFD. A Phosphoserine modification is found at S366. A compositionally biased stretch (acidic residues) spans 399–418; that stretch reads YNEEEDGDGGEEDVQDDEER. The span at 426 to 436 shows a compositional bias: basic and acidic residues; sequence DYGKQHFNDVL.

The protein belongs to the GOLM family.

The protein resides in the membrane. In Homo sapiens (Human), this protein is Protein GOLM2.